Here is a 466-residue protein sequence, read N- to C-terminus: Glutamate--tRNA ligase 1 (466 aa).

The 'HIGH' region motif lies at 9 to 19 (PSPTGMLHIGG). Positions 238–242 (KLSKR) match the 'KMSKS' region motif. Lysine 241 contributes to the ATP binding site.

Belongs to the class-I aminoacyl-tRNA synthetase family. Glutamate--tRNA ligase type 1 subfamily. As to quaternary structure, monomer.

The protein localises to the cytoplasm. The enzyme catalyses tRNA(Glu) + L-glutamate + ATP = L-glutamyl-tRNA(Glu) + AMP + diphosphate. Functionally, catalyzes the attachment of glutamate to tRNA(Glu) in a two-step reaction: glutamate is first activated by ATP to form Glu-AMP and then transferred to the acceptor end of tRNA(Glu). This chain is Glutamate--tRNA ligase 1, found in Acidiphilium cryptum (strain JF-5).